We begin with the raw amino-acid sequence, 124 residues long: Aspartate 1-decarboxylase (124 aa).

Catalysis depends on S25, which acts as the Schiff-base intermediate with substrate; via pyruvic acid. S25 is modified (pyruvic acid (Ser)). Residue T57 coordinates substrate. Y58 functions as the Proton donor in the catalytic mechanism. Position 71–73 (71–73 (GAA)) interacts with substrate.

The protein belongs to the PanD family. In terms of assembly, heterooctamer of four alpha and four beta subunits. The cofactor is pyruvate. In terms of processing, is synthesized initially as an inactive proenzyme, which is activated by self-cleavage at a specific serine bond to produce a beta-subunit with a hydroxyl group at its C-terminus and an alpha-subunit with a pyruvoyl group at its N-terminus.

It is found in the cytoplasm. The enzyme catalyses L-aspartate + H(+) = beta-alanine + CO2. The protein operates within cofactor biosynthesis; (R)-pantothenate biosynthesis; beta-alanine from L-aspartate: step 1/1. Functionally, catalyzes the pyruvoyl-dependent decarboxylation of aspartate to produce beta-alanine. This chain is Aspartate 1-decarboxylase, found in Bdellovibrio bacteriovorus (strain ATCC 15356 / DSM 50701 / NCIMB 9529 / HD100).